We begin with the raw amino-acid sequence, 245 residues long: tRNA pseudouridine synthase A (245 aa).

Residue aspartate 52 is the Nucleophile of the active site. Tyrosine 111 is a binding site for substrate.

This sequence belongs to the tRNA pseudouridine synthase TruA family. As to quaternary structure, homodimer.

The enzyme catalyses uridine(38/39/40) in tRNA = pseudouridine(38/39/40) in tRNA. Formation of pseudouridine at positions 38, 39 and 40 in the anticodon stem and loop of transfer RNAs. This Thermotoga sp. (strain RQ2) protein is tRNA pseudouridine synthase A.